The following is a 1231-amino-acid chain: STE20-like serine/threonine-protein kinase (1231 aa).

At Ser-14 the chain carries Phosphoserine. A Protein kinase domain is found at 34 to 292 (WETIGELGDG…TSQLLQHPFV (259 aa)). Residues 40-48 (LGDGAFGKV) and Lys-63 contribute to the ATP site. Asp-155 functions as the Proton acceptor in the catalytic mechanism. Phosphothreonine is present on Thr-183. Phosphoserine is present on Ser-189. A disordered region spans residues 309–351 (AEVTEEVEDGKEEDDDEEIENSLPIPTNKRASSDLSIASSEED). The segment covering 312–328 (TEEVEDGKEEDDDEEIE) has biased composition (acidic residues). Phosphoserine occurs at positions 330, 340, 341, 344, 347, 348, 354, and 372. Over residues 337-347 (KRASSDLSIAS) the composition is skewed to polar residues. Residues 405–478 (PDRATELPES…KQPVLENKLV (74 aa)) form a disordered region. Basic and acidic residues-rich tracts occupy residues 407-428 (RATE…RLPD) and 446-478 (DHAV…NKLV). Phosphoserine is present on Ser-507. Residues 516 to 531 (THEKLRKDDTTQKDVI) are compositionally biased toward basic and acidic residues. The disordered stretch occupies residues 516-757 (THEKLRKDDT…TGSTADNSSI (242 aa)). A phosphoserine mark is found at Ser-536 and Ser-554. Over residues 601-613 (TDQKLVENTHEKQ) the composition is skewed to basic and acidic residues. Over residues 615 to 624 (PISSETTLDT) the composition is skewed to polar residues. A phosphoserine mark is found at Ser-641 and Ser-661. A compositionally biased stretch (acidic residues) spans 641–660 (STEEVEVEGAVSETDEEDVQ). A compositionally biased stretch (low complexity) spans 683 to 692 (EAPAQVEVQV). Residues 693-706 (PVPPQPSEPPPAPI) are compositionally biased toward pro residues. The residue at position 775 (Ser-775) is a Phosphoserine. Thr-810 bears the Phosphothreonine mark. Position 814 is a phosphoserine (Ser-814). Residues 822–1065 (LRRQELRELR…LKNRQTQERA (244 aa)) adopt a coiled-coil conformation. In terms of domain architecture, UVR spans 871–906 (DQEIENLEKQQKQTIERLEQEHTNRLRDEAKRIKGE). A Phosphothreonine modification is found at Thr-1093. The stretch at 1105–1179 (SAQEEKRQKN…ELKEWREKLR (75 aa)) forms a coiled coil.

This sequence belongs to the protein kinase superfamily. STE Ser/Thr protein kinase family. STE20 subfamily. Post-translationally, proteolytically cleaved by caspase-3. In terms of processing, autophosphorylated. As to expression, ubiquitously expressed.

The protein resides in the cytoplasm. The enzyme catalyses L-seryl-[protein] + ATP = O-phospho-L-seryl-[protein] + ADP + H(+). It carries out the reaction L-threonyl-[protein] + ATP = O-phospho-L-threonyl-[protein] + ADP + H(+). Mediates apoptosis and actin stress fiber dissolution. The sequence is that of STE20-like serine/threonine-protein kinase (SLK) from Cavia porcellus (Guinea pig).